The following is a 258-amino-acid chain: MDWIDPLTTETRLPLIEICVEGIDGLLAAQAAGADRVELCASLVEGGITPSLGTVRAALDQATVPFHVMVRPRGGDFLYSETEYRSMLADVAALRDLGVPGVVFGCLNADGTIDEKRMGELTEAAGPLNVTCHRAFDMTRDPAEALEALIRCKVGRVLTSGQRDSAIEGLPLLADLVRQAGDRIIILGCGGLDLANIAEVRRKTGLAEMHFAALKDVPSTMRYRNPKVGMGGSDLDREYRNTLTDTPLVAATIAAAKA.

The protein belongs to the CutC family.

It localises to the cytoplasm. The sequence is that of PF03932 family protein CutC from Mesorhizobium japonicum (strain LMG 29417 / CECT 9101 / MAFF 303099) (Mesorhizobium loti (strain MAFF 303099)).